A 194-amino-acid chain; its full sequence is Probable GTP-binding protein EngB (194 aa).

Residues 23–194 form the EngB-type G domain; the sequence is LNGEFVFVGR…YELIEIFGGV (172 aa). GTP is bound by residues 31–38, 57–61, 75–78, 143–146, and 173–175; these read GRSNVGKS, GKTAS, DLPG, TKMD, and YSA. Ser38 and Thr59 together coordinate Mg(2+).

This sequence belongs to the TRAFAC class TrmE-Era-EngA-EngB-Septin-like GTPase superfamily. EngB GTPase family. It depends on Mg(2+) as a cofactor.

In terms of biological role, necessary for normal cell division and for the maintenance of normal septation. This Thermosipho africanus (strain TCF52B) protein is Probable GTP-binding protein EngB.